The chain runs to 92 residues: Small ribosomal subunit protein uS19 (92 aa).

It belongs to the universal ribosomal protein uS19 family.

In terms of biological role, protein S19 forms a complex with S13 that binds strongly to the 16S ribosomal RNA. The polypeptide is Small ribosomal subunit protein uS19 (Brucella anthropi (strain ATCC 49188 / DSM 6882 / CCUG 24695 / JCM 21032 / LMG 3331 / NBRC 15819 / NCTC 12168 / Alc 37) (Ochrobactrum anthropi)).